The sequence spans 768 residues: Protein transport protein Sec23A (768 aa).

N-acetylthreonine is present on threonine 2. 4 residues coordinate Zn(2+): cysteine 61, cysteine 66, cysteine 85, and cysteine 88. A Phosphothreonine modification is found at threonine 308. Residues proline 632–leucine 718 form a Gelsolin-like repeat.

This sequence belongs to the SEC23/SEC24 family. SEC23 subfamily. COPII is composed of at least five proteins: the Sec23/24 complex, the Sec13/31 complex and Sar1. Interacts with SEC23IP. Interacts with HTR4. Interacts with SEC16A. Interacts with SLC6A4. Interacts (as part of the Sec23/24 complex) with SEC22B; recruits SEC22B into COPII-coated vesicles and allows the transport of this cargo from the endoplasmic reticulum to the Golgi. Interacts (via Gelsolin-like repeat) with MIA2 and MIA3; specifically involved in the transport of large cargos like the collagen COL7A1. Interacts with DDHD1. Interacts with TMEM39A. Interacts with SACM1L; this interaction is reduced in the absence of TMEM39A. Interacts with kinase FAM20C; transport of FAM20C from the endoplasmic reticulum to the Golgi is likely to be mediated by COPII vesicles.

The protein resides in the cytoplasmic vesicle. Its subcellular location is the COPII-coated vesicle membrane. The protein localises to the endoplasmic reticulum membrane. It localises to the cytoplasm. It is found in the cytosol. Functionally, component of the coat protein complex II (COPII) which promotes the formation of transport vesicles from the endoplasmic reticulum (ER). The coat has two main functions, the physical deformation of the endoplasmic reticulum membrane into vesicles and the selection of cargo molecules for their transport to the Golgi complex. Required for the translocation of insulin-induced glucose transporter SLC2A4/GLUT4 to the cell membrane. This chain is Protein transport protein Sec23A, found in Bos taurus (Bovine).